The following is a 119-amino-acid chain: Large ribosomal subunit protein bL20 (119 aa).

The protein belongs to the bacterial ribosomal protein bL20 family.

Binds directly to 23S ribosomal RNA and is necessary for the in vitro assembly process of the 50S ribosomal subunit. It is not involved in the protein synthesizing functions of that subunit. The protein is Large ribosomal subunit protein bL20 of Nitrosomonas europaea (strain ATCC 19718 / CIP 103999 / KCTC 2705 / NBRC 14298).